The chain runs to 118 residues: Class II hydrophobin CRP (118 aa).

A signal peptide spans 1–22 (MQFSIIAISFLASLAMASPAKR). A disordered region spans residues 20–46 (AKRGGGGGGSGSGSGSGSGSGSGGGST). Over residues 22-45 (RGGGGGGSGSGSGSGSGSGSGGGS) the composition is skewed to gly residues. Repeat copies occupy residues 29–30 (SG), 31–32 (SG), 33–34 (SG), 35–36 (SG), 37–38 (SG), 39–40 (SG), and 41–42 (SG). The segment at 29-42 (SGSGSGSGSGSGSG) is 7 X 2 AA tandem repeats of S-G. Cystine bridges form between cysteine 51-cysteine 100, cysteine 61-cysteine 91, cysteine 62-cysteine 74, and cysteine 101-cysteine 112.

This sequence belongs to the cerato-ulmin hydrophobin family. Homotetramer. Further self-assembles to form highly ordered films at water-air interfaces through intermolecular interactions.

It is found in the secreted. The protein resides in the cell wall. Functionally, aerial growth, conidiation, and dispersal of filamentous fungi in the environment rely upon a capability of their secreting small amphipathic proteins called hydrophobins (HPBs) with low sequence identity. Class I can self-assemble into an outermost layer of rodlet bundles on aerial cell surfaces, conferring cellular hydrophobicity that supports fungal growth, development and dispersal; whereas Class II form highly ordered films at water-air interfaces through intermolecular interactions but contribute nothing to the rodlet structure. Cryparin is a class II hydrophobin that is the most abundant protein produced by this fungus when grown in liquid culture and that plays an essential role in the fitness of this important plant pathogen by facilitating the eruption of the fungal fruiting bodies through the bark of its host tree. The sequence is that of Class II hydrophobin CRP from Cryphonectria parasitica (Chestnut blight fungus).